The following is a 369-amino-acid chain: tRNA-specific 2-thiouridylase MnmA (369 aa).

ATP contacts are provided by residues 7-14 (GISGGVDS) and Met33. An interaction with target base in tRNA region spans residues 93–95 (NPD). The active-site Nucleophile is the Cys98. A disulfide bond links Cys98 and Cys195. Gly123 is an ATP binding site. The interaction with tRNA stretch occupies residues 145-147 (KDQ). Residue Cys195 is the Cysteine persulfide intermediate of the active site. The interaction with tRNA stretch occupies residues 307–308 (RY).

Belongs to the MnmA/TRMU family. In terms of assembly, interacts with TusE.

The protein localises to the cytoplasm. It catalyses the reaction S-sulfanyl-L-cysteinyl-[protein] + uridine(34) in tRNA + AH2 + ATP = 2-thiouridine(34) in tRNA + L-cysteinyl-[protein] + A + AMP + diphosphate + H(+). Functionally, catalyzes the 2-thiolation of uridine at the wobble position (U34) of tRNA(Lys), tRNA(Glu) and tRNA(Gln), leading to the formation of s(2)U34, the first step of tRNA-mnm(5)s(2)U34 synthesis. Sulfur is provided by IscS, via a sulfur-relay system. Binds ATP and its substrate tRNAs. This Blochmanniella floridana protein is tRNA-specific 2-thiouridylase MnmA.